The primary structure comprises 293 residues: 4-hydroxy-tetrahydrodipicolinate synthase (293 aa).

Thr45 lines the pyruvate pocket. Tyr133 functions as the Proton donor/acceptor in the catalytic mechanism. Lys161 serves as the catalytic Schiff-base intermediate with substrate. Position 203 (Ile203) interacts with pyruvate.

The protein belongs to the DapA family. Homotetramer; dimer of dimers.

It is found in the cytoplasm. It catalyses the reaction L-aspartate 4-semialdehyde + pyruvate = (2S,4S)-4-hydroxy-2,3,4,5-tetrahydrodipicolinate + H2O + H(+). The protein operates within amino-acid biosynthesis; L-lysine biosynthesis via DAP pathway; (S)-tetrahydrodipicolinate from L-aspartate: step 3/4. Catalyzes the condensation of (S)-aspartate-beta-semialdehyde [(S)-ASA] and pyruvate to 4-hydroxy-tetrahydrodipicolinate (HTPA). This chain is 4-hydroxy-tetrahydrodipicolinate synthase, found in Exiguobacterium sibiricum (strain DSM 17290 / CCUG 55495 / CIP 109462 / JCM 13490 / 255-15).